The primary structure comprises 197 residues: Casparian strip membrane protein 5 (197 aa).

Residues 1-34 (MSTTIDMPGSSKAAKAGKPVLVTTPSRPGGWKKG) lie on the Cytoplasmic side of the membrane. A helical transmembrane segment spans residues 35–55 (VAIMDFILRLGAIAAALGAAA). The Extracellular portion of the chain corresponds to 56–84 (TMGLSDQTLPFFTQFFQFEASYDSFTTFQ). Residues 85-105 (FFVITMALVAGYLVLSLPLSI) form a helical membrane-spanning segment. At 106-117 (VAVVRPHAAGPR) the chain is on the cytoplasmic side. A helical membrane pass occupies residues 118-138 (LFLIILDTVFLTLATASGASA). Over 139 to 171 (ASIVYLAHNGNQDTNWIAICNQFGDFCAQTSGA) the chain is Extracellular. A helical membrane pass occupies residues 172-192 (VVSSLVAVLVFVLLIVMSALV). The Cytoplasmic portion of the chain corresponds to 193–197 (LGKKH).

Belongs to the Casparian strip membrane proteins (CASP) family. In terms of assembly, homodimer and heterodimers.

Its subcellular location is the cell membrane. Its function is as follows. Regulates membrane-cell wall junctions and localized cell wall deposition. Required for establishment of the Casparian strip membrane domain (CSD) and the subsequent formation of Casparian strips, a cell wall modification of the root endodermis that determines an apoplastic barrier between the intraorganismal apoplasm and the extraorganismal apoplasm and prevents lateral diffusion. This Lotus japonicus (Lotus corniculatus var. japonicus) protein is Casparian strip membrane protein 5.